Consider the following 333-residue polypeptide: GTPase Obg (333 aa).

Residues 4-162 (GNFVDYVKIY…MDVILELKVL (159 aa)) form the Obg domain. The region spanning 163–332 (ADVGLVGFPN…LKDKLWKMLN (170 aa)) is the OBG-type G domain. GTP contacts are provided by residues 169-176 (GFPNAGKS), 194-198 (FTTLK), 216-219 (DIPG), 283-286 (SKCD), and 313-315 (SSV). Residues Ser176 and Thr196 each coordinate Mg(2+).

It belongs to the TRAFAC class OBG-HflX-like GTPase superfamily. OBG GTPase family. Monomer. Mg(2+) is required as a cofactor.

Its subcellular location is the cytoplasm. An essential GTPase which binds GTP, GDP and possibly (p)ppGpp with moderate affinity, with high nucleotide exchange rates and a fairly low GTP hydrolysis rate. Plays a role in control of the cell cycle, stress response, ribosome biogenesis and in those bacteria that undergo differentiation, in morphogenesis control. This chain is GTPase Obg, found in Flavobacterium johnsoniae (strain ATCC 17061 / DSM 2064 / JCM 8514 / BCRC 14874 / CCUG 350202 / NBRC 14942 / NCIMB 11054 / UW101) (Cytophaga johnsonae).